The following is a 340-amino-acid chain: NAC domain-containing protein 89 (340 aa).

The region spanning 21–164 is the NAC domain; sequence VFPGFKFSPT…AMVVCRVRRN (144 aa). Residues 119 to 170 mediate DNA binding; it reads IGTKRTLVFHIGRAPKGERTDWIMHEYCVKGVSLDDAMVVCRVRRNKEYNSG. The segment covering 167-181 has biased composition (polar residues); that stretch reads YNSGTSQKAPKPNSS. The disordered stretch occupies residues 167–198; the sequence is YNSGTSQKAPKPNSSAEKHAKVQNGATSSGSP.

Interacts with PAS1.

The protein resides in the cytoplasm. The protein localises to the nucleus. In terms of biological role, transcription factor involved in plant cell division. The chain is NAC domain-containing protein 89 (NAC089) from Arabidopsis thaliana (Mouse-ear cress).